Here is a 194-residue protein sequence, read N- to C-terminus: uncharacterized protein (194 aa).

The protein to A.aeolicus AQ_423.

This is an uncharacterized protein from Aquifex aeolicus (strain VF5).